The sequence spans 204 residues: Molybdenum cofactor guanylyltransferase (204 aa).

GTP is bound by residues 10-12 (LAG), lysine 23, asparagine 51, aspartate 69, and aspartate 99. Aspartate 99 contacts Mg(2+).

This sequence belongs to the MobA family. Monomer. Mg(2+) serves as cofactor.

It is found in the cytoplasm. The catalysed reaction is Mo-molybdopterin + GTP + H(+) = Mo-molybdopterin guanine dinucleotide + diphosphate. Transfers a GMP moiety from GTP to Mo-molybdopterin (Mo-MPT) cofactor (Moco or molybdenum cofactor) to form Mo-molybdopterin guanine dinucleotide (Mo-MGD) cofactor. This chain is Molybdenum cofactor guanylyltransferase, found in Shewanella piezotolerans (strain WP3 / JCM 13877).